The sequence spans 727 residues: 1,4-alpha-glucan branching enzyme GlgB (727 aa).

Catalysis depends on aspartate 405, which acts as the Nucleophile. Glutamate 458 serves as the catalytic Proton donor.

This sequence belongs to the glycosyl hydrolase 13 family. GlgB subfamily. As to quaternary structure, monomer.

The enzyme catalyses Transfers a segment of a (1-&gt;4)-alpha-D-glucan chain to a primary hydroxy group in a similar glucan chain.. It functions in the pathway glycan biosynthesis; glycogen biosynthesis. Its function is as follows. Catalyzes the formation of the alpha-1,6-glucosidic linkages in glycogen by scission of a 1,4-alpha-linked oligosaccharide from growing alpha-1,4-glucan chains and the subsequent attachment of the oligosaccharide to the alpha-1,6 position. This is 1,4-alpha-glucan branching enzyme GlgB from Yersinia enterocolitica serotype O:8 / biotype 1B (strain NCTC 13174 / 8081).